The chain runs to 370 residues: Mitogen-activated protein kinase mpkC (370 aa).

In terms of domain architecture, Protein kinase spans 19–298; the sequence is YANVRPVGLG…AAESLEHPYL (280 aa). Residues 25–33 and Lys48 contribute to the ATP site; that span reads VGLGAFGLV. Residue Asp140 is the Proton acceptor of the active site. Thr170 is subject to Phosphothreonine. Positions 170–172 match the TXY motif; the sequence is TGY. Tyr172 bears the Phosphotyrosine mark.

It belongs to the protein kinase superfamily. Ser/Thr protein kinase family. MAP kinase subfamily. HOG1 sub-subfamily. It depends on Mg(2+) as a cofactor. In terms of processing, dually phosphorylated on Thr-170 and Tyr-172, which activates the enzyme.

It carries out the reaction L-seryl-[protein] + ATP = O-phospho-L-seryl-[protein] + ADP + H(+). The enzyme catalyses L-threonyl-[protein] + ATP = O-phospho-L-threonyl-[protein] + ADP + H(+). Activated by tyrosine and threonine phosphorylation. Functionally, mitogen-activated protein kinase required for growth on media where sorbitol or mannitol is the sole carbon source. The protein is Mitogen-activated protein kinase mpkC (mpkC) of Aspergillus terreus (strain NIH 2624 / FGSC A1156).